A 274-amino-acid chain; its full sequence is Shikimate dehydrogenase (NADP(+)) (274 aa).

Shikimate-binding positions include 14-16 and Thr60; that span reads SKS. Lys64 serves as the catalytic Proton acceptor. Residue Glu76 participates in NADP(+) binding. Positions 85 and 101 each coordinate shikimate. Residues 126–130, 150–155, and Met214 contribute to the NADP(+) site; these read GAGGA and NRTARK. Tyr216 serves as a coordination point for shikimate. Residue Gly238 participates in NADP(+) binding.

The protein belongs to the shikimate dehydrogenase family. Homodimer.

It catalyses the reaction shikimate + NADP(+) = 3-dehydroshikimate + NADPH + H(+). It functions in the pathway metabolic intermediate biosynthesis; chorismate biosynthesis; chorismate from D-erythrose 4-phosphate and phosphoenolpyruvate: step 4/7. Involved in the biosynthesis of the chorismate, which leads to the biosynthesis of aromatic amino acids. Catalyzes the reversible NADPH linked reduction of 3-dehydroshikimate (DHSA) to yield shikimate (SA). In Pseudomonas aeruginosa (strain ATCC 15692 / DSM 22644 / CIP 104116 / JCM 14847 / LMG 12228 / 1C / PRS 101 / PAO1), this protein is Shikimate dehydrogenase (NADP(+)).